The sequence spans 197 residues: uncharacterized protein (197 aa).

Residues 1–23 (MSARAPKELRLALPPCLLNRTFA) form the signal peptide. N-linked (GlcNAc...) asparagine glycans are attached at residues N19 and N26. The Extracellular segment spans residues 24–61 (SPNASGSGNTGARGPGAGGSGTCITQVGQQLFQSFSST). A helical membrane pass occupies residues 62-82 (LVLIVLVTLIFCLIVLSLSTF). Topologically, residues 83-197 (HIHKRRMKKR…EGLLQTVVLS (115 aa)) are cytoplasmic. Residues 94 to 179 (MQRAQEEYER…ASSPQGAHAV (86 aa)) form a disordered region. Basic and acidic residues-rich tracts occupy residues 96–107 (RAQEEYERDHCS) and 125–136 (HAKETRLERQPR). Over residues 147 to 161 (SSSSSSSPGLPCQGP) the composition is skewed to low complexity. Pro residues predominate over residues 162–171 (CAPPPPPPAS).

It is found in the membrane. This is an uncharacterized protein from Pongo abelii (Sumatran orangutan).